Consider the following 1070-residue polypeptide: DNA-directed RNA polymerase subunit beta (1070 aa).

It belongs to the RNA polymerase beta chain family. As to quaternary structure, in plastids the minimal PEP RNA polymerase catalytic core is composed of four subunits: alpha, beta, beta', and beta''. When a (nuclear-encoded) sigma factor is associated with the core the holoenzyme is formed, which can initiate transcription.

Its subcellular location is the plastid. The enzyme catalyses RNA(n) + a ribonucleoside 5'-triphosphate = RNA(n+1) + diphosphate. Functionally, DNA-dependent RNA polymerase catalyzes the transcription of DNA into RNA using the four ribonucleoside triphosphates as substrates. In Cuscuta reflexa (Southern Asian dodder), this protein is DNA-directed RNA polymerase subunit beta (rpoB).